The following is a 203-amino-acid chain: Glycerol-3-phosphate acyltransferase (203 aa).

Helical transmembrane passes span 4–24 (IAPGMIFLAYLCGSISSAILV), 56–76 (VAVLVFDVLKGMLPVWGAYML), 80–100 (PFWLGLIAIAACVGHIWPVFF), 112–132 (FGAIAPIGWDLTGVMAGTWLL), and 138–158 (GYSSLGAIVSALIAPFYVWWF).

It belongs to the PlsY family. In terms of assembly, probably interacts with PlsX.

It is found in the cell inner membrane. The catalysed reaction is an acyl phosphate + sn-glycerol 3-phosphate = a 1-acyl-sn-glycero-3-phosphate + phosphate. It functions in the pathway lipid metabolism; phospholipid metabolism. Catalyzes the transfer of an acyl group from acyl-phosphate (acyl-PO(4)) to glycerol-3-phosphate (G3P) to form lysophosphatidic acid (LPA). This enzyme utilizes acyl-phosphate as fatty acyl donor, but not acyl-CoA or acyl-ACP. The polypeptide is Glycerol-3-phosphate acyltransferase (Enterobacter sp. (strain 638)).